The primary structure comprises 546 residues: MSKDPGRILIFDTTLRDGEQSPGASLNLEEKLAIAHQLARLGVDVIEAGFPFASPGDFKAVNKIANSVGKENGPIICGLARASKGDIKACYEAVSPAPKKRIHTFIATSDIHLKHKLKKSRKDVLQIVPEMVNYAKSLVDDIEFSCEDASRSDPDFLYEVIQLAISAGATTINIPDTVGFTTPNEFGKLISDINKNVPNIDEAVISVHGHNDLGLAVANFLEAVKNGARQLECTINGIGERAGNASLEELVMALHVRKSFFNKFFNRNSDSPTPLTAIRTEEITKTSRLVSNLTGMIVQPNKAIVGANAFAHESGIHQDGVLKNRLTYEIIDAKTVGLSDNKISLGKLSGRSAVRARLEEMGYDLSREDLNDAFARFKDLADRKREITDRDLEAIVSEQVQLPEAKFQLSLVQVSCGNASKPTATISLINTEDNSEDTAVSIGTGPVDAVCEALNKLAKVPNELIEFSVKSVTEGIDALGEVTIRIRRDNKIYSGHSADTDVVVAAANAYVNALNRLVFSEKKSSIHPQFDNLENADKTLLSNPGK.

The Pyruvate carboxyltransferase domain occupies 8–271 (ILIFDTTLRD…NKFFNRNSDS (264 aa)). Positions 17, 208, 210, and 244 each coordinate Mn(2+). The regulatory domain stretch occupies residues 408 to 546 (QLSLVQVSCG…DKTLLSNPGK (139 aa)).

It belongs to the alpha-IPM synthase/homocitrate synthase family. LeuA type 1 subfamily. Homodimer. The cofactor is Mn(2+).

It localises to the cytoplasm. It catalyses the reaction 3-methyl-2-oxobutanoate + acetyl-CoA + H2O = (2S)-2-isopropylmalate + CoA + H(+). The protein operates within amino-acid biosynthesis; L-leucine biosynthesis; L-leucine from 3-methyl-2-oxobutanoate: step 1/4. Functionally, catalyzes the condensation of the acetyl group of acetyl-CoA with 3-methyl-2-oxobutanoate (2-ketoisovalerate) to form 3-carboxy-3-hydroxy-4-methylpentanoate (2-isopropylmalate). In Prochlorococcus marinus (strain MIT 9215), this protein is 2-isopropylmalate synthase.